A 277-amino-acid chain; its full sequence is Undecaprenyl-diphosphatase (277 aa).

The next 5 helical transmembrane spans lie at F83–S103, L109–I129, A188–V208, A218–V238, and Y256–A276.

Belongs to the UppP family.

The protein localises to the cell inner membrane. The enzyme catalyses di-trans,octa-cis-undecaprenyl diphosphate + H2O = di-trans,octa-cis-undecaprenyl phosphate + phosphate + H(+). Catalyzes the dephosphorylation of undecaprenyl diphosphate (UPP). Confers resistance to bacitracin. The chain is Undecaprenyl-diphosphatase from Janthinobacterium sp. (strain Marseille) (Minibacterium massiliensis).